The primary structure comprises 325 residues: Undecaprenyl-phosphate 4-deoxy-4-formamido-L-arabinose transferase (325 aa).

The next 2 helical transmembrane spans lie at 235–255 and 269–291; these read LSVVGSVIAVSGFLLAVLLMV and VFTLFALLFIFIGAQFVAMGLLG.

This sequence belongs to the glycosyltransferase 2 family.

It is found in the cell inner membrane. It carries out the reaction UDP-4-deoxy-4-formamido-beta-L-arabinose + di-trans,octa-cis-undecaprenyl phosphate = 4-deoxy-4-formamido-alpha-L-arabinopyranosyl di-trans,octa-cis-undecaprenyl phosphate + UDP. Its pathway is glycolipid biosynthesis; 4-amino-4-deoxy-alpha-L-arabinose undecaprenyl phosphate biosynthesis; 4-amino-4-deoxy-alpha-L-arabinose undecaprenyl phosphate from UDP-4-deoxy-4-formamido-beta-L-arabinose and undecaprenyl phosphate: step 1/2. It functions in the pathway bacterial outer membrane biogenesis; lipopolysaccharide biosynthesis. In terms of biological role, catalyzes the transfer of 4-deoxy-4-formamido-L-arabinose from UDP to undecaprenyl phosphate. The modified arabinose is attached to lipid A and is required for resistance to polymyxin and cationic antimicrobial peptides. Essential for virulence in insects. The chain is Undecaprenyl-phosphate 4-deoxy-4-formamido-L-arabinose transferase from Photorhabdus laumondii subsp. laumondii (strain DSM 15139 / CIP 105565 / TT01) (Photorhabdus luminescens subsp. laumondii).